Consider the following 246-residue polypeptide: UDP-N-acetyl-D-mannosaminuronic acid transferase (246 aa).

It belongs to the glycosyltransferase 26 family.

The catalysed reaction is UDP-N-acetyl-alpha-D-mannosaminouronate + N-acetyl-alpha-D-glucosaminyl-di-trans,octa-cis-undecaprenyl diphosphate = beta-D-ManNAcA-(1-&gt;4)-alpha-D-GlcNAc-di-trans,octa-cis-undecaprenyl diphosphate + UDP + H(+). It participates in bacterial outer membrane biogenesis; enterobacterial common antigen biosynthesis. Functionally, catalyzes the synthesis of Und-PP-GlcNAc-ManNAcA (Lipid II), the second lipid-linked intermediate involved in enterobacterial common antigen (ECA) synthesis. The polypeptide is UDP-N-acetyl-D-mannosaminuronic acid transferase (Escherichia coli (strain ATCC 8739 / DSM 1576 / NBRC 3972 / NCIMB 8545 / WDCM 00012 / Crooks)).